The sequence spans 244 residues: Protein crossbronx (244 aa).

The region spanning 20–176 (QQEYKILAEY…VQKNIKESKD (157 aa)) is the UBC core domain.

Belongs to the ubiquitin-conjugating enzyme family. FTS subfamily.

This chain is Protein crossbronx (cbx), found in Drosophila yakuba (Fruit fly).